Reading from the N-terminus, the 357-residue chain is Uroporphyrinogen decarboxylase (357 aa).

Residues 30–34 (RQAGR), aspartate 79, tyrosine 154, serine 209, and histidine 336 contribute to the substrate site.

The protein belongs to the uroporphyrinogen decarboxylase family. Homodimer.

Its subcellular location is the cytoplasm. The catalysed reaction is uroporphyrinogen III + 4 H(+) = coproporphyrinogen III + 4 CO2. The protein operates within porphyrin-containing compound metabolism; protoporphyrin-IX biosynthesis; coproporphyrinogen-III from 5-aminolevulinate: step 4/4. Catalyzes the decarboxylation of four acetate groups of uroporphyrinogen-III to yield coproporphyrinogen-III. This chain is Uroporphyrinogen decarboxylase, found in Mycobacterium leprae (strain Br4923).